The primary structure comprises 975 residues: Leucine-zipper-like transcriptional regulator 1 homolog (975 aa).

Residues 16 to 32 (RGGGGGGCGGGGAGGSA) show a composition bias toward gly residues. Disordered regions lie at residues 16 to 41 (RGGG…TSGS) and 158 to 186 (MSSS…SCSS). Low complexity predominate over residues 174–186 (ASSSHPPGSSCSS). Kelch repeat units follow at residues 263 to 312 (AMFV…VAGS), 314 to 369 (MFIF…VYDN), 370 to 417 (KMWI…PVAV), 421 to 467 (AMYV…PSRR), 478 to 524 (FLYV…FHAS), and 530 to 581 (AMYI…FIVG). BTB domains lie at 574–670 (CDIQ…DLKD) and 801–870 (CDIS…KMPP).

Belongs to the LZTR1 family. As to quaternary structure, component of some BCR (BTB-CUL3-RBX1) E3 ubiquitin-protein ligase complex. As to expression, expressed in Rdl-expressing neurons of the mushroom body, the neurons projecting to the LC9 optic glomerulus and in a neuronal cluster near the subesophageal ganglion (at protein level).

The protein operates within protein modification; protein ubiquitination. Inhibitor of Ras signaling. Acts as a substrate-specific adapter of a BCR (BTB-CUL3-RBX1) E3 ubiquitin-protein ligase complex that mediates ubiquitination of Ras. Together with Nf1, plays an important role for normal sleep behavior, mainly during the night. Might affect sleep by modulating GABA signaling in Rdl-expressing neurons. Might play a role in the regulation of brain glycogen metabolism and organismal levels of triglycerides. This Drosophila melanogaster (Fruit fly) protein is Leucine-zipper-like transcriptional regulator 1 homolog.